The following is a 117-amino-acid chain: Basic phospholipase A2 pseudexin A chain (117 aa).

Disulfide bonds link cysteine 11–cysteine 71, cysteine 27–cysteine 117, cysteine 29–cysteine 45, cysteine 44–cysteine 98, cysteine 51–cysteine 91, cysteine 60–cysteine 84, and cysteine 78–cysteine 89. 3 residues coordinate Ca(2+): tyrosine 28, glycine 30, and glycine 32. The active site involves histidine 48. A Ca(2+)-binding site is contributed by aspartate 49. Aspartate 92 is an active-site residue.

This sequence belongs to the phospholipase A2 family. Group I subfamily. D49 sub-subfamily. Ca(2+) is required as a cofactor. In terms of tissue distribution, expressed by the venom gland.

The protein resides in the secreted. The catalysed reaction is a 1,2-diacyl-sn-glycero-3-phosphocholine + H2O = a 1-acyl-sn-glycero-3-phosphocholine + a fatty acid + H(+). PLA2 catalyzes the calcium-dependent hydrolysis of the 2-acyl groups in 3-sn-phosphoglycerides. This chain is Basic phospholipase A2 pseudexin A chain, found in Pseudechis porphyriacus (Red-bellied black snake).